The sequence spans 345 residues: Delta(6)-protoilludene synthase (345 aa).

Mg(2+) is bound by residues Asp-84, Asn-220, Ser-224, and Glu-228. Residues 84–88 (DEYSD) carry the DDXXD motif motif. (2E,6E)-farnesyl diphosphate contacts are provided by Arg-309 and Tyr-310.

It belongs to the terpene synthase family. Monomer. It depends on Mg(2+) as a cofactor.

It catalyses the reaction (2E,6E)-farnesyl diphosphate = Delta(6)-protoilludene + diphosphate. Its pathway is secondary metabolite biosynthesis. In terms of biological role, delta(6)-protoilludene synthase, part of the gene cluster that mediates the biosynthesis of melleolides, a range of antifungal and phytotoxic polyketide derivatives composed of an orsellinic acid (OA) moiety esterified to various sesquiterpene alcohols. The first step in melleolides biosynthesis is performed by the delta(6)-protoilludene synthase PRO1 which catalyzes the cyclization of farnesyl diphosphate to protoilludene. The orsellinic acid synthase armB produces OA by condensing acetyl-CoA with 3 malonyl-CoA units in a three-round chain elongation reaction folowed by a C2-C7 ring closure. ArmB further catalyzes the trans-esterification of OA to the various sesquiterpene alcohols resulting from the hydroxylation of protoilludene. The melleolides cluster also includes 5 cytochrome P450 monooxygenases, 4 NAD(+)-dependent oxidoreductases, one flavin-dependent oxidoreductase, and one O-methyltransferase. The cytochrome P450 monooxygenases may be involved in protoilludene hydroxylation to elaborate melleolides with multiple alcohol groups, such as melleolide D, which carries alcohol functionalities at C-4, C-5, C-10, and C-13. The role of the NAD(+)-dependent enzymes remains unknown. Numerous melleolides, including arnamial, show 5'-O-methylation of the aromatic moiety which may be catalyzed by the methyltransferase encoded in the cluster. The flavin-dependent oxidoreductase might represent the dehydrogenase yielding the aldehyde in position 1 of arnamial and other melleolides. Finally, several halogenases, localized outside of the cluster, are able to catalyze the transfer of a single chlorine atom to the melleolide backbone, resulting in a 6'-chloromelleolide product. This is Delta(6)-protoilludene synthase from Armillaria gallica (Bulbous honey fungus).